A 314-amino-acid polypeptide reads, in one-letter code: Deoxyhypusine hydroxylase (314 aa).

Methionine 1 is modified (N-acetylmethionine). 5 HEAT-like PBS-type repeats span residues 61–87 (LAHEAAFALGQMQDAEAIPALESVLND), 94–120 (VRHEAAEALGAIGLAGNVNILKKSLSS), 188–214 (ERYAALFALRNHGGEEAVSAIVDSLSA), 219–245 (LRHEVAYVLGQLQSKTALATLSKVLRD), and 252–278 (VRHEAAEALGSIADEQSIALLEEFSKD). Residues histidine 63, glutamate 64, histidine 96, and glutamate 97 each contribute to the Fe cation site. Histidine 221, glutamate 222, histidine 254, and glutamate 255 together coordinate Fe cation.

The protein belongs to the deoxyhypusine hydroxylase family. The cofactor is Fe(2+).

The catalysed reaction is [eIF5A protein]-deoxyhypusine + AH2 + O2 = [eIF5A protein]-hypusine + A + H2O. It participates in protein modification; eIF5A hypusination. Functionally, catalyzes the hydroxylation of the N(6)-(4-aminobutyl)-L-lysine intermediate to form hypusine, an essential post-translational modification only found in mature eIF-5A factor. This Arabidopsis thaliana (Mouse-ear cress) protein is Deoxyhypusine hydroxylase.